Here is a 488-residue protein sequence, read N- to C-terminus: MKKYIYIYFFFITITINDLVINNTSKCVSIERRKNNAYINYGIGYNGPDNKITKSRRCKRIKLCKKDLIDIGAIKKPINVAIFGSTGSIGTNALNIIRECNKIENVFNVKALYVNKSVNELYEQAREFLPEYLCIHDKSVYEELKELVKNIKDYKPIILCGDEGMKEICSSNSIDKIVIGIDSFQGLYSTMYAIMNNKIVALANKESIVSAGFFLKKLLNIHKNAKIIPVDSEHSAIFQCLDNNKVLKTKCLQDNFSKINNINKIFLCSSGGPFQNLTMDELKNVTSENALKHPKWKMGKKITIDSATMMNKGLEVIETHFLFDVDYNDIEVIVHKECIIHSCVEFIDKSVISQMYYPDMQIPILYSLTWPDRIKTNLKPLDLAQVSTLTFHKPSLEHFPCIKLAYQAGIKGNFYPTVLNASNEIANNLFLNNKIKYFDISSIISQVLESFNSQKVSENSEDLMKQILQIHSWAKDKATDIYNKHNSS.

The N-terminal 72 residues, 1-72, are a transit peptide targeting the apicoplast; sequence MKKYIYIYFF…LCKKDLIDIG (72 aa). NADP(+) is bound by residues 86–89 and 115–117; these read TGSI and NKS. Residue Lys-205 participates in 1-deoxy-D-xylulose 5-phosphate binding. An NADP(+)-binding site is contributed by Glu-206. Asp-231 is a Mn(2+) binding site. 1-deoxy-D-xylulose 5-phosphate is bound by residues Ser-232, Glu-233, Ser-270, and His-293. Glu-233 serves as a coordination point for Mn(2+). An NADP(+)-binding site is contributed by Gly-299. 4 residues coordinate 1-deoxy-D-xylulose 5-phosphate: Ser-306, Asn-311, Lys-312, and Glu-315. Mn(2+) is bound at residue Glu-315.

Belongs to the DXR family. In terms of assembly, homodimer. It depends on Mg(2+) as a cofactor. Mn(2+) serves as cofactor.

Its subcellular location is the plastid. It is found in the apicoplast. It catalyses the reaction 2-C-methyl-D-erythritol 4-phosphate + NADP(+) = 1-deoxy-D-xylulose 5-phosphate + NADPH + H(+). Its pathway is isoprenoid biosynthesis; isopentenyl diphosphate biosynthesis via DXP pathway; isopentenyl diphosphate from 1-deoxy-D-xylulose 5-phosphate: step 1/6. With respect to regulation, inhibited by fosmidomycin and its derivatives. In terms of biological role, catalyzes the NADPH-dependent rearrangement and reduction of 1-deoxy-D-xylulose-5-phosphate (DXP) to 2-C-methyl-D-erythritol 4-phosphate (MEP). The sequence is that of 1-deoxy-D-xylulose 5-phosphate reductoisomerase, apicoplastic (DXR) from Plasmodium falciparum (isolate 3D7).